The sequence spans 270 residues: MPRDNMASLIQRIARQACLTFRGSGGGRGASDRDAASGPEAPMQPGFPENLSKLKSLLTQLRAEDLNIAPRKATLQPLPPNLPPVTYMHIYETDGFSLGVFLLKSGTSIPLHDHPGMHGMLKVLYGTVRISCMDKLDAGGGQRPRALPPEQQFEPPLQPREREAVRPGVLRSRAEYTEASGPCILTPHRDNLHQIDAVEGPAAFLDILAPPYDPDDGRDCHYYRVLEPVRPKEASSSACDLPREVWLLETPQADDFWCEGEPYPGPKVFP.

Residues 21–48 (FRGSGGGRGASDRDAASGPEAPMQPGFP) form a disordered region. Residues His-112 and His-114 each coordinate Fe cation. The disordered stretch occupies residues 140-164 (GGQRPRALPPEQQFEPPLQPREREA). His-193 lines the Fe cation pocket. The 3'-(S-cysteinyl)-tyrosine (Cys-Tyr) cross-link spans 220–223 (CHYY).

Monomer. Requires Fe cation as cofactor.

The catalysed reaction is cysteamine + O2 = hypotaurine + H(+). The enzyme catalyses N-terminal L-cysteinyl-[protein] + O2 = N-terminal S-hydroxy-S-oxy-L-cysteinyl-[protein] + H(+). In terms of biological role, plays a vital role in regulating thiol metabolism and preserving oxygen homeostasis by oxidizing the sulfur of cysteamine and N-terminal cysteine-containing proteins to their corresponding sulfinic acids using O2 as a cosubstrate. Catalyzes the oxidation of cysteamine (2-aminoethanethiol) to hypotaurine. Catalyzes the oxidation of regulators of G-protein signaling 4 (RGS4) and 5 (RGS5) and interleukin-32 (IL32). The protein is 2-aminoethanethiol dioxygenase (ADO) of Homo sapiens (Human).